Reading from the N-terminus, the 232-residue chain is 5'-methylthioadenosine/S-adenosylhomocysteine nucleosidase (232 aa).

Glutamate 12 (proton acceptor) is an active-site residue. Residues glycine 78, isoleucine 152, and 173-174 (ME) each bind substrate. The active-site Proton donor is the aspartate 197.

Belongs to the PNP/UDP phosphorylase family. MtnN subfamily. As to quaternary structure, homodimer.

It catalyses the reaction S-adenosyl-L-homocysteine + H2O = S-(5-deoxy-D-ribos-5-yl)-L-homocysteine + adenine. It carries out the reaction S-methyl-5'-thioadenosine + H2O = 5-(methylsulfanyl)-D-ribose + adenine. The catalysed reaction is 5'-deoxyadenosine + H2O = 5-deoxy-D-ribose + adenine. It participates in amino-acid biosynthesis; L-methionine biosynthesis via salvage pathway; S-methyl-5-thio-alpha-D-ribose 1-phosphate from S-methyl-5'-thioadenosine (hydrolase route): step 1/2. Functionally, catalyzes the irreversible cleavage of the glycosidic bond in both 5'-methylthioadenosine (MTA) and S-adenosylhomocysteine (SAH/AdoHcy) to adenine and the corresponding thioribose, 5'-methylthioribose and S-ribosylhomocysteine, respectively. Also cleaves 5'-deoxyadenosine, a toxic by-product of radical S-adenosylmethionine (SAM) enzymes, into 5-deoxyribose and adenine. Thus, is required for in vivo function of the radical SAM enzymes biotin synthase and lipoic acid synthase, that are inhibited by 5'-deoxyadenosine accumulation. The sequence is that of 5'-methylthioadenosine/S-adenosylhomocysteine nucleosidase from Cronobacter sakazakii (strain ATCC BAA-894) (Enterobacter sakazakii).